A 149-amino-acid chain; its full sequence is Nucleoside diphosphate kinase (149 aa).

Residues Lys9, Phe57, Arg85, Thr91, Arg102, and Asn112 each coordinate ATP. The Pros-phosphohistidine intermediate role is filled by His115.

It belongs to the NDK family. As to quaternary structure, homotetramer. Mg(2+) serves as cofactor.

It localises to the cytoplasm. The enzyme catalyses a 2'-deoxyribonucleoside 5'-diphosphate + ATP = a 2'-deoxyribonucleoside 5'-triphosphate + ADP. It carries out the reaction a ribonucleoside 5'-diphosphate + ATP = a ribonucleoside 5'-triphosphate + ADP. In terms of biological role, major role in the synthesis of nucleoside triphosphates other than ATP. The ATP gamma phosphate is transferred to the NDP beta phosphate via a ping-pong mechanism, using a phosphorylated active-site intermediate. The chain is Nucleoside diphosphate kinase from Desulforamulus reducens (strain ATCC BAA-1160 / DSM 100696 / MI-1) (Desulfotomaculum reducens).